A 413-amino-acid polypeptide reads, in one-letter code: S-adenosylmethionine synthase (413 aa).

His15 is a binding site for ATP. A Mg(2+)-binding site is contributed by Asp17. Residue Glu43 coordinates K(+). Positions 56 and 100 each coordinate L-methionine. The flexible loop stretch occupies residues 100–110 (QSPDISQGVNE). ATP-binding positions include 171 to 173 (DGK), 248 to 249 (KF), Asp257, 263 to 264 (RK), Ala280, and Lys284. L-methionine is bound at residue Asp257. Lys288 is a binding site for L-methionine.

The protein belongs to the AdoMet synthase family. As to quaternary structure, homotetramer; dimer of dimers. Mg(2+) serves as cofactor. It depends on K(+) as a cofactor.

It is found in the cytoplasm. It carries out the reaction L-methionine + ATP + H2O = S-adenosyl-L-methionine + phosphate + diphosphate. The protein operates within amino-acid biosynthesis; S-adenosyl-L-methionine biosynthesis; S-adenosyl-L-methionine from L-methionine: step 1/1. Catalyzes the formation of S-adenosylmethionine (AdoMet) from methionine and ATP. The overall synthetic reaction is composed of two sequential steps, AdoMet formation and the subsequent tripolyphosphate hydrolysis which occurs prior to release of AdoMet from the enzyme. In Prochlorococcus marinus (strain MIT 9215), this protein is S-adenosylmethionine synthase.